We begin with the raw amino-acid sequence, 88 residues long: Small ribosomal subunit protein bS20 (88 aa).

Residues 1–27 (MANSKSAKKRALQSEKRRQHNASRRSM) are disordered.

Belongs to the bacterial ribosomal protein bS20 family.

In terms of biological role, binds directly to 16S ribosomal RNA. The sequence is that of Small ribosomal subunit protein bS20 from Shewanella sediminis (strain HAW-EB3).